Consider the following 223-residue polypeptide: Phosphoribosylformylglycinamidine synthase subunit PurQ (223 aa).

The region spanning 4–223 is the Glutamine amidotransferase type-1 domain; that stretch reads FAVVVFPGTN…FKGMVEWVRS (220 aa). The active-site Nucleophile is the cysteine 85. Residues histidine 196 and glutamate 198 contribute to the active site.

In terms of assembly, part of the FGAM synthase complex composed of 1 PurL, 1 PurQ and 2 PurS subunits.

The protein localises to the cytoplasm. It catalyses the reaction N(2)-formyl-N(1)-(5-phospho-beta-D-ribosyl)glycinamide + L-glutamine + ATP + H2O = 2-formamido-N(1)-(5-O-phospho-beta-D-ribosyl)acetamidine + L-glutamate + ADP + phosphate + H(+). The enzyme catalyses L-glutamine + H2O = L-glutamate + NH4(+). Its pathway is purine metabolism; IMP biosynthesis via de novo pathway; 5-amino-1-(5-phospho-D-ribosyl)imidazole from N(2)-formyl-N(1)-(5-phospho-D-ribosyl)glycinamide: step 1/2. Its function is as follows. Part of the phosphoribosylformylglycinamidine synthase complex involved in the purines biosynthetic pathway. Catalyzes the ATP-dependent conversion of formylglycinamide ribonucleotide (FGAR) and glutamine to yield formylglycinamidine ribonucleotide (FGAM) and glutamate. The FGAM synthase complex is composed of three subunits. PurQ produces an ammonia molecule by converting glutamine to glutamate. PurL transfers the ammonia molecule to FGAR to form FGAM in an ATP-dependent manner. PurS interacts with PurQ and PurL and is thought to assist in the transfer of the ammonia molecule from PurQ to PurL. This Pyrococcus furiosus (strain ATCC 43587 / DSM 3638 / JCM 8422 / Vc1) protein is Phosphoribosylformylglycinamidine synthase subunit PurQ.